We begin with the raw amino-acid sequence, 1409 residues long: Tensin-2 (1409 aa).

Residues 1 to 35 (MKSSGPVERLLRALGRRDSSRAASRPRKAEPHSFR) form a disordered region. Positions 9–20 (RLLRALGRRDSS) are enriched in basic and acidic residues. Residues 31 to 79 (PHSFREKVFRKKPPVCAVCKVTIDGTGVSCRVCKVATHRKCEAKVTSAC) form a Phorbol-ester/DAG-type zinc finger. T91 carries the phosphothreonine modification. A phosphoserine mark is found at S118 and S120. In terms of domain architecture, Phosphatase tensin-type spans 122–294 (DPLMERRWDL…SYFSGLLSGS (173 aa)). The active-site Phosphocysteine intermediate is the C231. Residues 299 to 425 (SSPLFLHYVL…ASVEFVFSSS (127 aa)) form the C2 tensin-type domain. The residue at position 455 (S455) is a Phosphoserine. Phosphotyrosine is present on Y456. Residues 462-536 (HHEDSVDGSL…SPGRPPPTAA (75 aa)) form a disordered region. Residue S466 is modified to Phosphoserine. T474 is modified (phosphothreonine). S481 carries the post-translational modification Phosphoserine. The residue at position 483 (Y483) is a Phosphotyrosine. The segment covering 491-506 (RQTPPAPSPEPPPPPM) has biased composition (pro residues). An Omega-N-methylarginine modification is found at R555. Disordered stretches follow at residues 562-582 (AILDDEEQPTVGGGPHLGVYP), 812-1098 (PGEG…SSPA), and 1111-1130 (LSDNVPQTPEPPTQESQSNV). Phosphoserine occurs at positions 820, 825, 830, 832, 835, and 845. Polar residues-rich tracts occupy residues 900-918 (SASSELSGPSTPLHTSSPV) and 930-940 (RSPTSAPTQRL). The residue at position 910 (T910) is a Phosphothreonine. S931, S941, and S972 each carry phosphoserine. The span at 968–982 (PLAPSPVSPTFPPSS) shows a compositional bias: pro residues. Residue T977 is modified to Phosphothreonine. S991 and S1003 each carry phosphoserine. Over residues 1046–1056 (PEPPQSSPTPA) the composition is skewed to pro residues. The 108-residue stretch at 1140-1247 (WYKPHLSRDQ…SLPCCLRIPS (108 aa)) folds into the SH2 domain. T1182 carries the post-translational modification Phosphothreonine. S1247 is subject to Phosphoserine. The 134-residue stretch at 1275-1408 (ACSVLYLTSV…FITKVLLGQR (134 aa)) folds into the PTB domain.

This sequence belongs to the PTEN phosphatase protein family. As to quaternary structure, interacts with AXL. Interacts with SYK; leading to its phosphorylation. Interacts with SQSTM1 (via PB1 domain); the interaction leads to sequestration of TNS2 in cytoplasmic aggregates with SQSTM1 and promotes TNS2 ubiquitination and proteasomal degradation. In terms of processing, ubiquitinated following sequestration in cytoplasmic aggregates with SQSTM1, leading to proteasomal degradation. Detected in heart, kidney, brain, thymus, spleen, liver, placenta, lung, skeletal muscle and small intestine.

The protein localises to the cell junction. Its subcellular location is the focal adhesion. It localises to the cell membrane. It is found in the cytoplasm. It catalyses the reaction O-phospho-L-tyrosyl-[protein] + H2O = L-tyrosyl-[protein] + phosphate. Functionally, tyrosine-protein phosphatase which regulates cell motility, proliferation and muscle-response to insulin. Phosphatase activity is mediated by binding to phosphatidylinositol-3,4,5-triphosphate (PtdIns(3,4,5)P3) via the SH2 domain. In muscles and under catabolic conditions, dephosphorylates IRS1 leading to its degradation and muscle atrophy. Negatively regulates PI3K-AKT pathway activation. Dephosphorylates nephrin NPHS1 in podocytes which regulates activity of the mTORC1 complex. Under normal glucose conditions, NPHS1 outcompetes IRS1 for binding to phosphatidylinositol 3-kinase (PI3K) which balances mTORC1 activity but high glucose conditions lead to up-regulation of TNS2, increased NPHS1 dephosphorylation and activation of mTORC1, contributing to podocyte hypertrophy and proteinuria. Required for correct podocyte morphology, podocyte-glomerular basement membrane interaction and integrity of the glomerular filtration barrier. Enhances RHOA activation in the presence of DLC1. Plays a role in promoting DLC1-dependent remodeling of the extracellular matrix. This chain is Tensin-2 (TNS2), found in Homo sapiens (Human).